Reading from the N-terminus, the 461-residue chain is D-phenylhydantoinase (461 aa).

Positions 59, 61, and 151 each coordinate a divalent metal cation. Lys151 bears the N6-carboxylysine mark. A substrate-binding site is contributed by Tyr156. A divalent metal cation is bound by residues His182 and His239. Residue Ser286 coordinates substrate. Asp313 serves as a coordination point for a divalent metal cation. Residue Asn335 coordinates substrate.

Belongs to the metallo-dependent hydrolases superfamily. Hydantoinase/dihydropyrimidinase family. As to quaternary structure, homotetramer. It depends on a divalent metal cation as a cofactor. In terms of processing, carboxylation allows a single lysine to coordinate two divalent metal cations.

The catalysed reaction is D-5-phenylhydantoin + H2O = N-carbamoyl-D-phenylglycine + H(+). Catalyzes the stereospecific hydrolysis of the cyclic amide bond of D-hydantoin derivatives with an aromatic side chains at the 5'-position. Has no activity on dihydropyrimidines. The physiological function is unknown. The sequence is that of D-phenylhydantoinase from Escherichia coli (strain 55989 / EAEC).